Reading from the N-terminus, the 468-residue chain is 3-isopropylmalate dehydratase large subunit (468 aa).

[4Fe-4S] cluster contacts are provided by cysteine 347, cysteine 407, and cysteine 410.

Belongs to the aconitase/IPM isomerase family. LeuC type 1 subfamily. In terms of assembly, heterodimer of LeuC and LeuD. It depends on [4Fe-4S] cluster as a cofactor.

The catalysed reaction is (2R,3S)-3-isopropylmalate = (2S)-2-isopropylmalate. Its pathway is amino-acid biosynthesis; L-leucine biosynthesis; L-leucine from 3-methyl-2-oxobutanoate: step 2/4. Its function is as follows. Catalyzes the isomerization between 2-isopropylmalate and 3-isopropylmalate, via the formation of 2-isopropylmaleate. The sequence is that of 3-isopropylmalate dehydratase large subunit from Prochlorococcus marinus (strain SARG / CCMP1375 / SS120).